We begin with the raw amino-acid sequence, 289 residues long: Ribonuclease Z (289 aa).

Residues histidine 63, histidine 65, aspartate 67, histidine 68, histidine 143, aspartate 197, and histidine 255 each contribute to the Zn(2+) site. Catalysis depends on aspartate 67, which acts as the Proton acceptor.

Belongs to the RNase Z family. As to quaternary structure, homodimer. The cofactor is Zn(2+).

It carries out the reaction Endonucleolytic cleavage of RNA, removing extra 3' nucleotides from tRNA precursor, generating 3' termini of tRNAs. A 3'-hydroxy group is left at the tRNA terminus and a 5'-phosphoryl group is left at the trailer molecule.. Its function is as follows. Zinc phosphodiesterase, which displays some tRNA 3'-processing endonuclease activity. Probably involved in tRNA maturation, by removing a 3'-trailer from precursor tRNA. In Azobacteroides pseudotrichonymphae genomovar. CFP2, this protein is Ribonuclease Z.